The following is a 307-amino-acid chain: Fructose-bisphosphate aldolase (307 aa).

A D-glyceraldehyde 3-phosphate-binding site is contributed by Ser-49. Asp-82 functions as the Proton donor in the catalytic mechanism. Zn(2+)-binding residues include His-83, Asp-104, Glu-134, and His-180. Gly-181 contributes to the dihydroxyacetone phosphate binding site. A Zn(2+)-binding site is contributed by His-210. Dihydroxyacetone phosphate-binding positions include Gly-211–Ser-213 and Asn-253–Thr-256.

Belongs to the class II fructose-bisphosphate aldolase family. In terms of assembly, homodimer. Zn(2+) serves as cofactor.

It catalyses the reaction beta-D-fructose 1,6-bisphosphate = D-glyceraldehyde 3-phosphate + dihydroxyacetone phosphate. The protein operates within carbohydrate degradation; glycolysis; D-glyceraldehyde 3-phosphate and glycerone phosphate from D-glucose: step 4/4. Catalyzes the aldol condensation of dihydroxyacetone phosphate (DHAP or glycerone-phosphate) with glyceraldehyde 3-phosphate (G3P) to form fructose 1,6-bisphosphate (FBP) in gluconeogenesis and the reverse reaction in glycolysis. The protein is Fructose-bisphosphate aldolase (fba) of Helicobacter pylori (strain ATCC 700392 / 26695) (Campylobacter pylori).